We begin with the raw amino-acid sequence, 516 residues long: Maturase K (516 aa).

The protein belongs to the intron maturase 2 family. MatK subfamily.

The protein localises to the plastid. It localises to the chloroplast. Its function is as follows. Usually encoded in the trnK tRNA gene intron. Probably assists in splicing its own and other chloroplast group II introns. The polypeptide is Maturase K (Chara vulgaris (Common stonewort)).